Here is a 212-residue protein sequence, read N- to C-terminus: Phosphatidylserine decarboxylase proenzyme (212 aa).

Ser-182 acts as the Schiff-base intermediate with substrate; via pyruvic acid in catalysis. Ser-182 is modified (pyruvic acid (Ser); by autocatalysis).

It belongs to the phosphatidylserine decarboxylase family. PSD-A subfamily. Heterodimer of a large membrane-associated beta subunit and a small pyruvoyl-containing alpha subunit. Pyruvate serves as cofactor. Post-translationally, is synthesized initially as an inactive proenzyme. Formation of the active enzyme involves a self-maturation process in which the active site pyruvoyl group is generated from an internal serine residue via an autocatalytic post-translational modification. Two non-identical subunits are generated from the proenzyme in this reaction, and the pyruvate is formed at the N-terminus of the alpha chain, which is derived from the carboxyl end of the proenzyme. The post-translation cleavage follows an unusual pathway, termed non-hydrolytic serinolysis, in which the side chain hydroxyl group of the serine supplies its oxygen atom to form the C-terminus of the beta chain, while the remainder of the serine residue undergoes an oxidative deamination to produce ammonia and the pyruvoyl prosthetic group on the alpha chain.

It localises to the cell membrane. It carries out the reaction a 1,2-diacyl-sn-glycero-3-phospho-L-serine + H(+) = a 1,2-diacyl-sn-glycero-3-phosphoethanolamine + CO2. The protein operates within phospholipid metabolism; phosphatidylethanolamine biosynthesis; phosphatidylethanolamine from CDP-diacylglycerol: step 2/2. Catalyzes the formation of phosphatidylethanolamine (PtdEtn) from phosphatidylserine (PtdSer). This is Phosphatidylserine decarboxylase proenzyme from Paraburkholderia phytofirmans (strain DSM 17436 / LMG 22146 / PsJN) (Burkholderia phytofirmans).